Consider the following 127-residue polypeptide: MSLLRNRLQDLPALCLCVLVLACIGACQSEAYEGTPSPPPKLKMSHWSLVMGRMKELLEPVLNRTRDRWQWFWSPSTFRGFMQTYYDDHLRDLGPRTKAWLLKSKESLLNKTHSLCPRIVCGDKDQG.

Positions 1–27 (MSLLRNRLQDLPALCLCVLVLACIGAC) are cleaved as a signal peptide.

Belongs to the apolipoprotein C4 family.

Its subcellular location is the secreted. Its function is as follows. May participate in lipoprotein metabolism. This chain is Apolipoprotein C-IV (APOC4), found in Papio hamadryas (Hamadryas baboon).